A 471-amino-acid chain; its full sequence is Plasmepsin VII (471 aa).

The N-terminal stretch at 1-24 (MKSVYHHFAIIFFLKLFLCNCILS) is a signal peptide. Residues 96-438 (YYGKIAIGEN…DKDNLQIGFV (343 aa)) form the Peptidase A1 domain. Residues aspartate 115 and aspartate 325 contribute to the active site.

The protein belongs to the peptidase A1 family.

The protein resides in the cytoplasm. The chain is Plasmepsin VII from Plasmodium berghei (strain Anka).